The following is a 442-amino-acid chain: 3-phosphoshikimate 1-carboxyvinyltransferase (442 aa).

Positions 25, 26, and 30 each coordinate 3-phosphoshikimate. Lys25 is a binding site for phosphoenolpyruvate. Positions 97 and 125 each coordinate phosphoenolpyruvate. 3-phosphoshikimate-binding residues include Ser170, Gln172, Asp323, and Lys350. Position 172 (Gln172) interacts with phosphoenolpyruvate. Residue Asp323 is the Proton acceptor of the active site. Phosphoenolpyruvate is bound by residues Arg354 and Arg399.

This sequence belongs to the EPSP synthase family. In terms of assembly, monomer.

It is found in the cytoplasm. It carries out the reaction 3-phosphoshikimate + phosphoenolpyruvate = 5-O-(1-carboxyvinyl)-3-phosphoshikimate + phosphate. The protein operates within metabolic intermediate biosynthesis; chorismate biosynthesis; chorismate from D-erythrose 4-phosphate and phosphoenolpyruvate: step 6/7. Catalyzes the transfer of the enolpyruvyl moiety of phosphoenolpyruvate (PEP) to the 5-hydroxyl of shikimate-3-phosphate (S3P) to produce enolpyruvyl shikimate-3-phosphate and inorganic phosphate. The protein is 3-phosphoshikimate 1-carboxyvinyltransferase of Bartonella quintana (strain Toulouse) (Rochalimaea quintana).